The following is a 49-amino-acid chain: Large ribosomal subunit protein bL33 (49 aa).

The tract at residues 18–49 (ITTKNKRNNPERLELKKYSPRLKRTTLHRETK) is disordered. Residues 25–34 (NNPERLELKK) are compositionally biased toward basic and acidic residues.

This sequence belongs to the bacterial ribosomal protein bL33 family.

The polypeptide is Large ribosomal subunit protein bL33 (Lysinibacillus sphaericus (strain C3-41)).